Reading from the N-terminus, the 187-residue chain is Ribosome-recycling factor (187 aa).

The protein belongs to the RRF family.

The protein resides in the cytoplasm. Functionally, responsible for the release of ribosomes from messenger RNA at the termination of protein biosynthesis. May increase the efficiency of translation by recycling ribosomes from one round of translation to another. The chain is Ribosome-recycling factor from Orientia tsutsugamushi (strain Boryong) (Rickettsia tsutsugamushi).